Consider the following 156-residue polypeptide: Small ribosomal subunit protein uS7 (156 aa).

The protein belongs to the universal ribosomal protein uS7 family. Part of the 30S ribosomal subunit. Contacts proteins S9 and S11.

Functionally, one of the primary rRNA binding proteins, it binds directly to 16S rRNA where it nucleates assembly of the head domain of the 30S subunit. Is located at the subunit interface close to the decoding center, probably blocks exit of the E-site tRNA. This is Small ribosomal subunit protein uS7 from Bacillus mycoides (strain KBAB4) (Bacillus weihenstephanensis).